A 140-amino-acid polypeptide reads, in one-letter code: L-fucose mutarotase (140 aa).

The active-site Proton donor is His22. Substrate is bound by residues Asp30, Arg107, and 129–131 (YGN).

The protein belongs to the RbsD / FucU family. FucU mutarotase subfamily. Homodecamer.

Its subcellular location is the cytoplasm. It catalyses the reaction alpha-L-fucose = beta-L-fucose. The protein operates within carbohydrate metabolism; L-fucose metabolism. Functionally, involved in the anomeric conversion of L-fucose. This is L-fucose mutarotase from Klebsiella pneumoniae (strain 342).